The sequence spans 322 residues: tRNA uridine(34) hydroxylase (322 aa).

The Rhodanese domain occupies 125–219 (QDPNTIVIDA…YGKDPEVQGK (95 aa)). Cys-179 acts as the Cysteine persulfide intermediate in catalysis.

It belongs to the TrhO family.

It catalyses the reaction uridine(34) in tRNA + AH2 + O2 = 5-hydroxyuridine(34) in tRNA + A + H2O. Functionally, catalyzes oxygen-dependent 5-hydroxyuridine (ho5U) modification at position 34 in tRNAs. In Bacillus subtilis (strain 168), this protein is tRNA uridine(34) hydroxylase.